We begin with the raw amino-acid sequence, 365 residues long: Protein-glutamate methylesterase/protein-glutamine glutaminase 1 (365 aa).

The Response regulatory domain maps to K4–R121. D55 bears the 4-aspartylphosphate mark. A disordered region spans residues A138–P173. Residues S158–A172 show a composition bias toward low complexity. Positions K182–V365 constitute a CheB-type methylesterase domain. Active-site residues include S189, H216, and D310.

It belongs to the CheB family. Post-translationally, phosphorylated by CheA. Phosphorylation of the N-terminal regulatory domain activates the methylesterase activity.

It localises to the cytoplasm. The enzyme catalyses [protein]-L-glutamate 5-O-methyl ester + H2O = L-glutamyl-[protein] + methanol + H(+). The catalysed reaction is L-glutaminyl-[protein] + H2O = L-glutamyl-[protein] + NH4(+). In terms of biological role, involved in chemotaxis. Part of a chemotaxis signal transduction system that modulates chemotaxis in response to various stimuli. Catalyzes the demethylation of specific methylglutamate residues introduced into the chemoreceptors (methyl-accepting chemotaxis proteins or MCP) by CheR. Also mediates the irreversible deamidation of specific glutamine residues to glutamic acid. This is Protein-glutamate methylesterase/protein-glutamine glutaminase 1 from Saccharophagus degradans (strain 2-40 / ATCC 43961 / DSM 17024).